The following is a 1077-amino-acid chain: Bifunctional helicase and thymine dioxygenase JBP2 (1077 aa).

A thymine dioxygenase region spans residues 1 to 516 (MPMFMDGASQ…PPLCIPFKIA (516 aa)). Residues His391, Asp393, and His441 each contribute to the Fe cation site. Arg455 contributes to the 2-oxoglutarate binding site. The segment at 517-1075 (KTLSLTQHAA…RNIDTVKSER (559 aa)) is DNA Helicase. A Helicase ATP-binding domain is found at 531–706 (SRRIKEGDGC…YRLVGWVDDK (176 aa)). 544–551 (LTMGLGKT) contacts ATP. Residues 657 to 660 (DEGH) carry the DEAH box motif. One can recognise a Helicase C-terminal domain in the interval 871-1032 (KLTALISILH…QVVPGHDLVD (162 aa)).

It in the C-terminal section; belongs to the SNF2/RAD54 helicase family. This sequence in the N-terminal section; belongs to the TET family. JBP2 subfamily. The cofactor is Fe(2+).

It localises to the nucleus. The enzyme catalyses ATP + H2O = ADP + phosphate + H(+). It catalyses the reaction thymine + 2-oxoglutarate + O2 = 5-hydroxymethyluracil + succinate + CO2. Dioxygenase that catalyzes the first step of DNA base J (beta-d-glucosyl-HOMedU) biosynthesis by converting thymine to 5-hydroxymethyluracil (HOMedU). DNA base J is a hypermodified thymidine residue found in the genome of kinetoplastid parasites, which is localized primarily to repetitive DNA, namely the telomeres, and is implicated in the regulation of antigenic variation. Probably also acts as a DNA helicase. Recognizes and binds specific regions of the genome, hydrolyzes ATP and allows the DNA base J de novo synthesis. Involved in initial synthesis of DNA base J, JBP1 being able to act via the basal level of DNA base J and propagate further synthesis. In contrast to JBP1, it does not specifically bind DNA base J, however it binds chromatin. This Trypanosoma brucei brucei (strain 927/4 GUTat10.1) protein is Bifunctional helicase and thymine dioxygenase JBP2 (JBP2).